A 200-amino-acid polypeptide reads, in one-letter code: Protein GrpE (200 aa).

The span at 1-11 shows a compositional bias: polar residues; that stretch reads MSNQTNKAQDN. Positions 1-29 are disordered; sequence MSNQTNKAQDNQVEEIVEGELLNENGTEA.

Belongs to the GrpE family. Homodimer.

It localises to the cytoplasm. In terms of biological role, participates actively in the response to hyperosmotic and heat shock by preventing the aggregation of stress-denatured proteins, in association with DnaK and GrpE. It is the nucleotide exchange factor for DnaK and may function as a thermosensor. Unfolded proteins bind initially to DnaJ; upon interaction with the DnaJ-bound protein, DnaK hydrolyzes its bound ATP, resulting in the formation of a stable complex. GrpE releases ADP from DnaK; ATP binding to DnaK triggers the release of the substrate protein, thus completing the reaction cycle. Several rounds of ATP-dependent interactions between DnaJ, DnaK and GrpE are required for fully efficient folding. The sequence is that of Protein GrpE from Shewanella halifaxensis (strain HAW-EB4).